The chain runs to 258 residues: Aspartate/glutamate leucyltransferase (258 aa).

The protein belongs to the R-transferase family. Bpt subfamily.

The protein resides in the cytoplasm. The enzyme catalyses N-terminal L-glutamyl-[protein] + L-leucyl-tRNA(Leu) = N-terminal L-leucyl-L-glutamyl-[protein] + tRNA(Leu) + H(+). It carries out the reaction N-terminal L-aspartyl-[protein] + L-leucyl-tRNA(Leu) = N-terminal L-leucyl-L-aspartyl-[protein] + tRNA(Leu) + H(+). In terms of biological role, functions in the N-end rule pathway of protein degradation where it conjugates Leu from its aminoacyl-tRNA to the N-termini of proteins containing an N-terminal aspartate or glutamate. This is Aspartate/glutamate leucyltransferase from Bradyrhizobium sp. (strain ORS 278).